Here is a 449-residue protein sequence, read N- to C-terminus: Phosphoglucosamine mutase (449 aa).

The Phosphoserine intermediate role is filled by serine 104. Mg(2+)-binding residues include serine 104, aspartate 243, aspartate 245, and aspartate 247. Serine 104 carries the phosphoserine modification.

Belongs to the phosphohexose mutase family. Requires Mg(2+) as cofactor. In terms of processing, activated by phosphorylation.

It catalyses the reaction alpha-D-glucosamine 1-phosphate = D-glucosamine 6-phosphate. In terms of biological role, catalyzes the conversion of glucosamine-6-phosphate to glucosamine-1-phosphate. This Xanthomonas oryzae pv. oryzae (strain PXO99A) protein is Phosphoglucosamine mutase.